Here is a 37-residue protein sequence, read N- to C-terminus: Omega-agatoxin-Aa3d (37 aa).

This sequence belongs to the neurotoxin 04 (omega-agtx) family. 03 (type II/III omega-agtx) subfamily. Post-translationally, disulfide bonds are present. Expressed by the venom gland.

The protein resides in the secreted. Functionally, omega-agatoxins are antagonists of voltage-gated calcium channels. This toxin blocks calcium channels in insect central neurons but not at peripheral neuromuscular junctions. In vertebrates, it is broadly active against all high-threshold Cav1/CACNA1 channels and Cav2.2/CACNA1B channels. In Agelenopsis aperta (North American funnel-web spider), this protein is Omega-agatoxin-Aa3d.